The sequence spans 108 residues: FK506-binding protein 1 (108 aa).

Residues G20–N108 enclose the PPIase FKBP-type domain.

It belongs to the FKBP-type PPIase family. FKBP1 subfamily.

It is found in the cytoplasm. The catalysed reaction is [protein]-peptidylproline (omega=180) = [protein]-peptidylproline (omega=0). With respect to regulation, inhibited by both FK506 and rapamycin. Functionally, PPIases accelerate the folding of proteins. It catalyzes the cis-trans isomerization of proline imidic peptide bonds in oligopeptides. The polypeptide is FK506-binding protein 1 (FPR1) (Cryptococcus neoformans var. neoformans serotype D (strain JEC21 / ATCC MYA-565) (Filobasidiella neoformans)).